The following is a 132-amino-acid chain: Holo-[acyl-carrier-protein] synthase (132 aa).

Mg(2+)-binding residues include Asp13 and Glu63.

The protein belongs to the P-Pant transferase superfamily. AcpS family. It depends on Mg(2+) as a cofactor.

It localises to the cytoplasm. The catalysed reaction is apo-[ACP] + CoA = holo-[ACP] + adenosine 3',5'-bisphosphate + H(+). Transfers the 4'-phosphopantetheine moiety from coenzyme A to a Ser of acyl-carrier-protein. The sequence is that of Holo-[acyl-carrier-protein] synthase from Gloeobacter violaceus (strain ATCC 29082 / PCC 7421).